A 424-amino-acid chain; its full sequence is SNF1-related protein kinase regulatory subunit gamma-1 (424 aa).

Alanine 2 carries the N-acetylalanine modification. Position 44 is a phosphoserine (serine 44). CBS domains are found at residues 63-131, 185-244, 263-324, and 350-408; these read LSSD…EPPS, TFRW…CAGL, MSKD…YHDY, and IMSG…SGYF.

It belongs to the 5'-AMP-activated protein kinase gamma subunit family. As to quaternary structure, subunit of a probable heterotrimeric complex consisting of an alpha catalytic (KIN10 or KIN11) subunit, and a beta (KINB) and a gamma (KING or SNF4) non-catalytic regulatory subunits. Interacts with HXK1 in mitochondrion. Post-translationally, sumoylated by SIZ1. Expressed in vegetative organs and, to lower extent, in reproductive organs.

It is found in the mitochondrion. Functionally, regulatory subunit of the probable trimeric SNF1-related protein kinase (SnRK) complex, which may play a role in a signal transduction cascade regulating gene expression and carbohydrate metabolism in higher plants. The SnRK complex may also be involved in the regulation of fatty acid synthesis by phosphorylation of acetyl-CoA carboxylase and in assimilation of nitrogen by phosphorylating nitrate reductase. In Arabidopsis thaliana (Mouse-ear cress), this protein is SNF1-related protein kinase regulatory subunit gamma-1 (KING1).